Reading from the N-terminus, the 1056-residue chain is Isoleucine--tRNA ligase (1056 aa).

Over residues 1–13 the composition is skewed to polar residues; that stretch reads MCDQGEVSSQNSS. The interval 1 to 26 is disordered; the sequence is MCDQGEVSSQNSSDYKEQRPTPRPNL. The 'HIGH' region signature appears at 63-73; that stretch reads PFANGLPHFGH. Positions 632 to 636 match the 'KMSKS' region motif; the sequence is KASKS. Lys635 contacts ATP.

The protein belongs to the class-I aminoacyl-tRNA synthetase family. IleS type 2 subfamily. Monomer. Zn(2+) is required as a cofactor.

It is found in the cytoplasm. The catalysed reaction is tRNA(Ile) + L-isoleucine + ATP = L-isoleucyl-tRNA(Ile) + AMP + diphosphate. Catalyzes the attachment of isoleucine to tRNA(Ile). As IleRS can inadvertently accommodate and process structurally similar amino acids such as valine, to avoid such errors it has two additional distinct tRNA(Ile)-dependent editing activities. One activity is designated as 'pretransfer' editing and involves the hydrolysis of activated Val-AMP. The other activity is designated 'posttransfer' editing and involves deacylation of mischarged Val-tRNA(Ile). This is Isoleucine--tRNA ligase from Tropheryma whipplei (strain TW08/27) (Whipple's bacillus).